The sequence spans 320 residues: Short-chain dehydrogenase/reductase ARMGADRAFT_1169971 (320 aa).

Residues 19–39 (KVAVVTGANSGIGLYILFHVA) form a helical membrane-spanning segment. NADP(+) contacts are provided by Ile-30, Asp-78, Asn-105, and Lys-136. N-linked (GlcNAc...) asparagine glycosylation is present at Asn-157. The active-site Proton donor is Ser-159. Residues Tyr-192, Lys-196, Val-227, and Ser-229 each coordinate NADP(+). The active-site Proton acceptor is the Tyr-192. The active-site Lowers pKa of active site Tyr is Lys-196. A helical transmembrane segment spans residues 235–255 (LFTSLMFGTIINWVFSLFFIS).

Belongs to the short-chain dehydrogenases/reductases (SDR) family.

It localises to the membrane. The protein operates within secondary metabolite biosynthesis. In terms of biological role, short-chain dehydrogenase/reductase, part of the gene cluster that mediates the biosynthesis of melleolides, a range of antifungal and phytotoxic polyketide derivatives composed of an orsellinic acid (OA) moiety esterified to various sesquiterpene alcohols. The first step in melleolides biosynthesis is performed by the delta(6)-protoilludene synthase PRO1 which catalyzes the cyclization of farnesyl diphosphate to protoilludene. The orsellinic acid synthase armB produces OA by condensing acetyl-CoA with 3 malonyl-CoA units in a three-round chain elongation reaction folowed by a C2-C7 ring closure. ArmB further catalyzes the trans-esterification of OA to the various sesquiterpene alcohols resulting from the hydroxylation of protoilludene. The melleolides cluster also includes 5 cytochrome P450 monooxygenases, 4 NAD(+)-dependent oxidoreductases, one flavin-dependent oxidoreductase, and one O-methyltransferase. The cytochrome P450 monooxygenases may be involved in protoilludene hydroxylation to elaborate melleolides with multiple alcohol groups, such as melleolide D, which carries alcohol functionalities at C-4, C-5, C-10, and C-13. The role of the NAD(+)-dependent enzymes remains unknown. Numerous melleolides, including arnamial, show 5'-O-methylation of the aromatic moiety which may be catalyzed by the methyltransferase encoded in the cluster. The flavin-dependent oxidoreductase might represent the dehydrogenase yielding the aldehyde in position 1 of arnamial and other melleolides. Finally, several halogenase localized outside of the cluster, are able to catalyze the transfer of a single chlorine atom to the melleolide backbone, resulting in a 6'-chloromelleolide product. The chain is Short-chain dehydrogenase/reductase ARMGADRAFT_1169971 from Armillaria gallica (Bulbous honey fungus).